A 224-amino-acid polypeptide reads, in one-letter code: UPF0758 protein lin1584 (224 aa).

One can recognise an MPN domain in the interval 102–224; the sequence is VIRCPEDAVK…YISLKEKGYF (123 aa). Residues His173, His175, and Asp186 each contribute to the Zn(2+) site. The short motif at 173 to 186 is the JAMM motif element; it reads HNHPSGDPAPSSED.

The protein belongs to the UPF0758 family.

The protein is UPF0758 protein lin1584 of Listeria innocua serovar 6a (strain ATCC BAA-680 / CLIP 11262).